The following is a 152-amino-acid chain: D-aminoacyl-tRNA deacylase (152 aa).

Residues Gly142–Pro143 carry the Gly-cisPro motif, important for rejection of L-amino acids motif.

It belongs to the DTD family. As to quaternary structure, homodimer.

Its subcellular location is the cytoplasm. The catalysed reaction is glycyl-tRNA(Ala) + H2O = tRNA(Ala) + glycine + H(+). It catalyses the reaction a D-aminoacyl-tRNA + H2O = a tRNA + a D-alpha-amino acid + H(+). Functionally, an aminoacyl-tRNA editing enzyme that deacylates mischarged D-aminoacyl-tRNAs. Also deacylates mischarged glycyl-tRNA(Ala), protecting cells against glycine mischarging by AlaRS. Acts via tRNA-based rather than protein-based catalysis; rejects L-amino acids rather than detecting D-amino acids in the active site. By recycling D-aminoacyl-tRNA to D-amino acids and free tRNA molecules, this enzyme counteracts the toxicity associated with the formation of D-aminoacyl-tRNA entities in vivo and helps enforce protein L-homochirality. This chain is D-aminoacyl-tRNA deacylase, found in Burkholderia cenocepacia (strain ATCC BAA-245 / DSM 16553 / LMG 16656 / NCTC 13227 / J2315 / CF5610) (Burkholderia cepacia (strain J2315)).